Consider the following 440-residue polypeptide: Ribosomal protein uS12 methylthiotransferase RimO (440 aa).

One can recognise an MTTase N-terminal domain in the interval 6-116 (PKVGFVSLGC…VVSAVHEVVP (111 aa)). [4Fe-4S] cluster-binding residues include cysteine 15, cysteine 51, cysteine 80, cysteine 149, cysteine 153, and cysteine 156. A Radical SAM core domain is found at 135–374 (LTPRHYAYLK…AHQQAISSAR (240 aa)). The TRAM domain occupies 376–440 (QAKIGLEMDV…DEYDMWGELV (65 aa)).

The protein belongs to the methylthiotransferase family. RimO subfamily. [4Fe-4S] cluster is required as a cofactor.

The protein resides in the cytoplasm. It catalyses the reaction L-aspartate(89)-[ribosomal protein uS12]-hydrogen + (sulfur carrier)-SH + AH2 + 2 S-adenosyl-L-methionine = 3-methylsulfanyl-L-aspartate(89)-[ribosomal protein uS12]-hydrogen + (sulfur carrier)-H + 5'-deoxyadenosine + L-methionine + A + S-adenosyl-L-homocysteine + 2 H(+). Catalyzes the methylthiolation of an aspartic acid residue of ribosomal protein uS12. In Ectopseudomonas mendocina (strain ymp) (Pseudomonas mendocina), this protein is Ribosomal protein uS12 methylthiotransferase RimO.